The chain runs to 379 residues: UDP-4-amino-4-deoxy-L-arabinose--oxoglutarate aminotransferase (379 aa).

Residue Lys182 is modified to N6-(pyridoxal phosphate)lysine.

The protein belongs to the DegT/DnrJ/EryC1 family. ArnB subfamily. Homodimer. Pyridoxal 5'-phosphate is required as a cofactor.

It catalyses the reaction UDP-4-amino-4-deoxy-beta-L-arabinose + 2-oxoglutarate = UDP-beta-L-threo-pentopyranos-4-ulose + L-glutamate. Its pathway is nucleotide-sugar biosynthesis; UDP-4-deoxy-4-formamido-beta-L-arabinose biosynthesis; UDP-4-deoxy-4-formamido-beta-L-arabinose from UDP-alpha-D-glucuronate: step 2/3. It functions in the pathway bacterial outer membrane biogenesis; lipopolysaccharide biosynthesis. Functionally, catalyzes the conversion of UDP-4-keto-arabinose (UDP-Ara4O) to UDP-4-amino-4-deoxy-L-arabinose (UDP-L-Ara4N). The modified arabinose is attached to lipid A and is required for resistance to polymyxin and cationic antimicrobial peptides. In Salmonella heidelberg (strain SL476), this protein is UDP-4-amino-4-deoxy-L-arabinose--oxoglutarate aminotransferase.